Consider the following 426-residue polypeptide: Enolase (426 aa).

Gln162 contacts (2R)-2-phosphoglycerate. Glu204 acts as the Proton donor in catalysis. Residues Asp241, Glu284, and Asp311 each coordinate Mg(2+). (2R)-2-phosphoglycerate is bound by residues Lys336, Arg365, Ser366, and Lys387. Lys336 (proton acceptor) is an active-site residue.

This sequence belongs to the enolase family. As to quaternary structure, component of the RNA degradosome, a multiprotein complex involved in RNA processing and mRNA degradation. Mg(2+) is required as a cofactor.

Its subcellular location is the cytoplasm. It localises to the secreted. It is found in the cell surface. The enzyme catalyses (2R)-2-phosphoglycerate = phosphoenolpyruvate + H2O. It functions in the pathway carbohydrate degradation; glycolysis; pyruvate from D-glyceraldehyde 3-phosphate: step 4/5. In terms of biological role, catalyzes the reversible conversion of 2-phosphoglycerate (2-PG) into phosphoenolpyruvate (PEP). It is essential for the degradation of carbohydrates via glycolysis. In Thioalkalivibrio sulfidiphilus (strain HL-EbGR7), this protein is Enolase.